The chain runs to 70 residues: Large ribosomal subunit protein eL38 (70 aa).

It belongs to the eukaryotic ribosomal protein eL38 family.

The sequence is that of Large ribosomal subunit protein eL38 (RpL38) from Aedes aegypti (Yellowfever mosquito).